A 917-amino-acid chain; its full sequence is Protein FAN (917 aa).

Positions 176–247 constitute a GRAM domain; it reads RLARTSFDKN…QDVRRIYKRR (72 aa). In terms of domain architecture, BEACH-type PH spans 189 to 286; sequence NISEKLHMEC…DRDDLYFYIA (98 aa). In terms of domain architecture, BEACH spans 290–575; it reads EHHVAEHTAE…QLFVTPHPRR (286 aa). WD repeat units follow at residues 628 to 658, 670 to 700, 712 to 740, 761 to 791, 803 to 833, and 884 to 914; these read IHKE…KMFS, FSNM…YFYS, GHDD…KVWS, EHDV…NIWD, CHSG…NVID, and GHTG…IFWK.

As to expression, ubiquitous.

Couples the p55 TNF-receptor (TNF-R55 / TNFR1) to neutral sphingomyelinase (N-SMASE). Specifically binds to the N-smase activation domain of TNF-R55. May regulate ceramide production by N-SMASE. The sequence is that of Protein FAN (NSMAF) from Homo sapiens (Human).